A 215-amino-acid chain; its full sequence is Ribosomal RNA small subunit methyltransferase G (215 aa).

Residues Gly77, Phe82, 130-131 (IE), and Arg146 each bind S-adenosyl-L-methionine.

It belongs to the methyltransferase superfamily. RNA methyltransferase RsmG family.

It localises to the cytoplasm. The enzyme catalyses guanosine(527) in 16S rRNA + S-adenosyl-L-methionine = N(7)-methylguanosine(527) in 16S rRNA + S-adenosyl-L-homocysteine. Functionally, specifically methylates the N7 position of guanine in position 527 of 16S rRNA. The protein is Ribosomal RNA small subunit methyltransferase G of Bartonella quintana (strain Toulouse) (Rochalimaea quintana).